The following is a 319-amino-acid chain: Aspartate carbamoyltransferase catalytic subunit (319 aa).

Positions 65 and 66 each coordinate carbamoyl phosphate. Residue K93 participates in L-aspartate binding. R115, H149, and Q152 together coordinate carbamoyl phosphate. Positions 182 and 237 each coordinate L-aspartate. G278 and P279 together coordinate carbamoyl phosphate.

This sequence belongs to the aspartate/ornithine carbamoyltransferase superfamily. ATCase family. Heterododecamer (2C3:3R2) of six catalytic PyrB chains organized as two trimers (C3), and six regulatory PyrI chains organized as three dimers (R2).

It catalyses the reaction carbamoyl phosphate + L-aspartate = N-carbamoyl-L-aspartate + phosphate + H(+). The protein operates within pyrimidine metabolism; UMP biosynthesis via de novo pathway; (S)-dihydroorotate from bicarbonate: step 2/3. Catalyzes the condensation of carbamoyl phosphate and aspartate to form carbamoyl aspartate and inorganic phosphate, the committed step in the de novo pyrimidine nucleotide biosynthesis pathway. The protein is Aspartate carbamoyltransferase catalytic subunit of Azoarcus sp. (strain BH72).